Reading from the N-terminus, the 232-residue chain is Zinc import ATP-binding protein ZnuC (232 aa).

Residues 5 to 220 (VNLKNIFVFY…PSFIEMFGCY (216 aa)) enclose the ABC transporter domain. 37-44 (GPNGSGKS) contacts ATP.

It belongs to the ABC transporter superfamily. Zinc importer (TC 3.A.1.15.5) family. The complex is composed of two ATP-binding proteins (ZnuC), two transmembrane proteins (ZnuB) and a solute-binding protein (ZnuA).

The protein localises to the cell membrane. It carries out the reaction Zn(2+)(out) + ATP(in) + H2O(in) = Zn(2+)(in) + ADP(in) + phosphate(in) + H(+)(in). Its function is as follows. Part of the ABC transporter complex ZnuABC involved in zinc import. Responsible for energy coupling to the transport system. In Wigglesworthia glossinidia brevipalpis, this protein is Zinc import ATP-binding protein ZnuC.